The chain runs to 428 residues: Glutamate-1-semialdehyde 2,1-aminomutase (428 aa).

Residue Lys-266 is modified to N6-(pyridoxal phosphate)lysine.

This sequence belongs to the class-III pyridoxal-phosphate-dependent aminotransferase family. HemL subfamily. In terms of assembly, homodimer. Pyridoxal 5'-phosphate serves as cofactor.

It is found in the cytoplasm. The enzyme catalyses (S)-4-amino-5-oxopentanoate = 5-aminolevulinate. It functions in the pathway porphyrin-containing compound metabolism; protoporphyrin-IX biosynthesis; 5-aminolevulinate from L-glutamyl-tRNA(Glu): step 2/2. The sequence is that of Glutamate-1-semialdehyde 2,1-aminomutase from Herminiimonas arsenicoxydans.